A 249-amino-acid polypeptide reads, in one-letter code: tRNA (guanine-N(7)-)-methyltransferase (249 aa).

S-adenosyl-L-methionine is bound by residues glutamate 80, glutamate 105, aspartate 132, and aspartate 155. Aspartate 155 is an active-site residue. Residues lysine 159, aspartate 191, and 228–231 (TKFE) each bind substrate.

The protein belongs to the class I-like SAM-binding methyltransferase superfamily. TrmB family.

It carries out the reaction guanosine(46) in tRNA + S-adenosyl-L-methionine = N(7)-methylguanosine(46) in tRNA + S-adenosyl-L-homocysteine. It participates in tRNA modification; N(7)-methylguanine-tRNA biosynthesis. Its function is as follows. Catalyzes the formation of N(7)-methylguanine at position 46 (m7G46) in tRNA. This is tRNA (guanine-N(7)-)-methyltransferase from Mannheimia succiniciproducens (strain KCTC 0769BP / MBEL55E).